Consider the following 441-residue polypeptide: C4-dicarboxylate transport protein (441 aa).

A run of 8 helical transmembrane segments spans residues 9–29, 45–65, 79–99, 145–165, 187–207, 220–240, 308–328, and 356–376; these read SLYF…HFMP, LVKM…IAGM, LLYF…VVNV, AFAE…GFAL, FAAI…AMAF, LAAL…LVLG, IYLT…LTLT, and AATL…ILGI.

Belongs to the dicarboxylate/amino acid:cation symporter (DAACS) (TC 2.A.23) family.

The protein localises to the cell inner membrane. In terms of biological role, responsible for the transport of dicarboxylates such as succinate, fumarate, and malate from the periplasm across the membrane. This is C4-dicarboxylate transport protein from Laribacter hongkongensis (strain HLHK9).